A 386-amino-acid chain; its full sequence is GTPase Obg (386 aa).

Residues 1–159 (MKFIDEARIE…RTLKLELKVL (159 aa)) form the Obg domain. The OBG-type G domain occupies 160 to 348 (ADVGLLGMPN…LTFAIMSYLD (189 aa)). GTP is bound by residues 166–173 (GMPNAGKS), 191–195 (FTTLH), 213–216 (DIPG), 284–287 (NKVD), and 329–331 (SAL). The Mg(2+) site is built by Ser173 and Thr193.

Belongs to the TRAFAC class OBG-HflX-like GTPase superfamily. OBG GTPase family. As to quaternary structure, monomer. Mg(2+) is required as a cofactor.

The protein localises to the cytoplasm. An essential GTPase which binds GTP, GDP and possibly (p)ppGpp with moderate affinity, with high nucleotide exchange rates and a fairly low GTP hydrolysis rate. Plays a role in control of the cell cycle, stress response, ribosome biogenesis and in those bacteria that undergo differentiation, in morphogenesis control. This chain is GTPase Obg, found in Chromobacterium violaceum (strain ATCC 12472 / DSM 30191 / JCM 1249 / CCUG 213 / NBRC 12614 / NCIMB 9131 / NCTC 9757 / MK).